The chain runs to 318 residues: Olfactory receptor 2T34 (318 aa).

Over 1–30 the chain is Extracellular; that stretch reads MCSGNQTSQNQTASTDFTLTGLFAESKHAA. Residues Asn5 and Asn10 are each glycosylated (N-linked (GlcNAc...) asparagine). The chain crosses the membrane as a helical span at residues 31 to 54; that stretch reads LLYTVTFLLFLMALTGNALLILLI. At 55–62 the chain is on the cytoplasmic side; it reads HSEPRLHT. The helical transmembrane segment at 63 to 84 threads the bilayer; the sequence is PMYFFISQLALMDLMYLCVTVP. Over 85–105 the chain is Extracellular; the sequence is KMLVGQVTGDDTISPSGCGIQ. An intrachain disulfide couples Cys102 to Cys194. Residues 106–125 form a helical membrane-spanning segment; the sequence is MFFHLTLAGAEVFLLAAMAY. Residues 126–144 are Cytoplasmic-facing; that stretch reads DRYAAVCRPLHYPLLMNQR. Residues 145-163 traverse the membrane as a helical segment; that stretch reads VCQLLVSACWVLGMVDGLL. Topologically, residues 164–200 are extracellular; that stretch reads LTPITMSFPFCQSRKILSFFCETPALLKLSCSDVSLY. The chain crosses the membrane as a helical span at residues 201–224; the sequence is KMLTYLCCILMLLTPIMVISSSYT. Over 225-241 the chain is Cytoplasmic; sequence LILHLIHRMNSAAGRRK. A helical transmembrane segment spans residues 242 to 264; it reads ALATCSSHMIIVLLLFGASFYTY. The Extracellular portion of the chain corresponds to 265–277; the sequence is MLRSSYHTAEQDM. A helical membrane pass occupies residues 278–297; it reads MVSAFYTIFTPVLNPLIYSL. The Cytoplasmic portion of the chain corresponds to 298–318; sequence RNKDVTRALRSMMQSRMNQEK.

The protein belongs to the G-protein coupled receptor 1 family.

Its subcellular location is the cell membrane. Its function is as follows. Odorant receptor. The chain is Olfactory receptor 2T34 (OR2T34) from Homo sapiens (Human).